The following is a 1029-amino-acid chain: Myosin phosphatase Rho-interacting protein (1029 aa).

Residues 1–387 (MSAAKENPCR…DRRSTESSMT (387 aa)) form an interaction with F-actin region. The region spanning 43 to 150 (KPIYGGWLLL…WLEMLMVYPR (108 aa)) is the PH 1 domain. A disordered region spans residues 152-267 (NKQNQKKKRK…GDRVDGGRKV (116 aa)). A compositionally biased stretch (low complexity) spans 179-195 (SSSGGSSGSSSSSSSSS). Residues serine 198, serine 224, serine 226, serine 230, and serine 232 each carry the phosphoserine modification. Low complexity predominate over residues 226–237 (SPVQSPSQSQPP). Residues 245-267 (TGLDSKEDENILSGDRVDGGRKV) show a composition bias toward basic and acidic residues. A phosphoserine mark is found at serine 271, serine 275, serine 294, and serine 297. 2 disordered regions span residues 279–306 (AKQD…SRRS) and 333–383 (PSSD…RSTE). Threonine 300 carries the phosphothreonine modification. Positions 338-354 (RQGRSERRAIPRKRDFA) are enriched in basic and acidic residues. Residue serine 369 is modified to Phosphoserine. Positions 391 to 487 (LNFKKGWLTK…WIQTIMKHVL (97 aa)) constitute a PH 2 domain. The tract at residues 490–614 (SAPDVTSSLP…NDGPGMEDTA (125 aa)) is disordered. Residues 492–509 (PDVTSSLPEGKNKSTSFD) are compositionally biased toward polar residues. Serine 497 carries the post-translational modification Phosphoserine. A compositionally biased stretch (basic and acidic residues) spans 527-550 (PEQKKSRARERRREGRSKTFDWAE). The tract at residues 550 to 828 (EFRPIQQALA…SVQRELEVLS (279 aa)) is interaction with RHOA. Positions 562 to 571 (RASTVGSSDS) are enriched in polar residues. Basic and acidic residues predominate over residues 583–592 (ELERERARRR). The residue at position 622 (serine 622) is a Phosphoserine. At threonine 650 the chain carries Phosphothreonine. The stretch at 675–979 (STHELTSLLE…LKAATEALGE (305 aa)) forms a coiled coil. Serine 804 is modified (phosphoserine). An interaction with PPP1R12A region spans residues 828–883 (SEQYSQKCLENAHLAQALEAERQALRQCQRENQELNAHNQELNNRLAAEITRLRTL). 4 positions are modified to phosphoserine: serine 981, serine 997, serine 1018, and serine 1020.

In terms of assembly, binds RHOA, PPP1R12A/MBS and PPP1R12C/MBS85 through adjacent coiled coil domains. Interacts with MYZAP. Binds F-actin through its N-terminus.

It localises to the cytoplasm. Its subcellular location is the cytoskeleton. Its function is as follows. Targets myosin phosphatase to the actin cytoskeleton. Required for the regulation of the actin cytoskeleton by RhoA and ROCK1. Depletion leads to an increased number of stress fibers in smooth muscle cells through stabilization of actin fibers by phosphorylated myosin. Overexpression of MRIP as well as its F-actin-binding region leads to disassembly of stress fibers in neuronal cells. The polypeptide is Myosin phosphatase Rho-interacting protein (Mprip) (Rattus norvegicus (Rat)).